The primary structure comprises 192 residues: Ion-translocating oxidoreductase complex subunit A (192 aa).

6 helical membrane-spanning segments follow: residues 5 to 25, 39 to 59, 67 to 87, 102 to 122, 134 to 154, and 171 to 191; these read VLLL…FLGL, IGMG…AYLV, LGIE…VVQF, LLGI…VALL, IIYG…FASM, and SIAM…TGLV.

It belongs to the NqrDE/RnfAE family. In terms of assembly, the complex is composed of six subunits: RnfA, RnfB, RnfC, RnfD, RnfE and RnfG.

The protein localises to the cell inner membrane. Part of a membrane-bound complex that couples electron transfer with translocation of ions across the membrane. The chain is Ion-translocating oxidoreductase complex subunit A from Vibrio parahaemolyticus serotype O3:K6 (strain RIMD 2210633).